Reading from the N-terminus, the 423-residue chain is Adenylosuccinate synthetase (423 aa).

GTP is bound by residues 12–18 (GDEGKGK) and 40–42 (GHT). Residue Asp13 is the Proton acceptor of the active site. Positions 13 and 40 each coordinate Mg(2+). IMP-binding positions include 13–16 (DEGK), 38–41 (NAGH), Thr129, Arg143, Gln224, Thr239, and Arg303. His41 functions as the Proton donor in the catalytic mechanism. 299 to 305 (ATTGRKR) contacts substrate. Residues Arg305, 331–333 (KGD), and 412–414 (SVG) contribute to the GTP site.

It belongs to the adenylosuccinate synthetase family. In terms of assembly, homodimer. The cofactor is Mg(2+).

Its subcellular location is the cytoplasm. The catalysed reaction is IMP + L-aspartate + GTP = N(6)-(1,2-dicarboxyethyl)-AMP + GDP + phosphate + 2 H(+). It functions in the pathway purine metabolism; AMP biosynthesis via de novo pathway; AMP from IMP: step 1/2. Its function is as follows. Plays an important role in the de novo pathway of purine nucleotide biosynthesis. Catalyzes the first committed step in the biosynthesis of AMP from IMP. The sequence is that of Adenylosuccinate synthetase from Christiangramia forsetii (strain DSM 17595 / CGMCC 1.15422 / KT0803) (Gramella forsetii).